A 335-amino-acid polypeptide reads, in one-letter code: Acetyl-coenzyme A carboxylase carboxyl transferase subunit alpha (335 aa).

A CoA carboxyltransferase C-terminal domain is found at 48-308 (TLELKVDALR…KEILIEELKA (261 aa)).

Belongs to the AccA family. In terms of assembly, acetyl-CoA carboxylase is a heterohexamer composed of biotin carboxyl carrier protein (AccB), biotin carboxylase (AccC) and two subunits each of ACCase subunit alpha (AccA) and ACCase subunit beta (AccD).

It localises to the cytoplasm. It catalyses the reaction N(6)-carboxybiotinyl-L-lysyl-[protein] + acetyl-CoA = N(6)-biotinyl-L-lysyl-[protein] + malonyl-CoA. Its pathway is lipid metabolism; malonyl-CoA biosynthesis; malonyl-CoA from acetyl-CoA: step 1/1. Functionally, component of the acetyl coenzyme A carboxylase (ACC) complex. First, biotin carboxylase catalyzes the carboxylation of biotin on its carrier protein (BCCP) and then the CO(2) group is transferred by the carboxyltransferase to acetyl-CoA to form malonyl-CoA. This chain is Acetyl-coenzyme A carboxylase carboxyl transferase subunit alpha, found in Pelodictyon phaeoclathratiforme (strain DSM 5477 / BU-1).